A 228-amino-acid polypeptide reads, in one-letter code: Ribosomal RNA small subunit methyltransferase G (228 aa).

S-adenosyl-L-methionine contacts are provided by residues G92, F97, 115–117 (EAT), 143–144 (AE), and R156.

It belongs to the methyltransferase superfamily. RNA methyltransferase RsmG family.

The protein localises to the cytoplasm. In terms of biological role, specifically methylates the N7 position of a guanine in 16S rRNA. This chain is Ribosomal RNA small subunit methyltransferase G, found in Thermosynechococcus vestitus (strain NIES-2133 / IAM M-273 / BP-1).